A 130-amino-acid chain; its full sequence is Riboflavin kinase (130 aa).

Position 12–17 (12–17) interacts with CDP; that stretch reads GLGVGA. Mg(2+)-binding residues include Thr-39 and Asn-41. Residues Thr-90 and Glu-98 each contribute to the FMN site. 103–106 contacts CDP; the sequence is KNLR.

Belongs to the archaeal riboflavin kinase family. It depends on Mg(2+) as a cofactor.

It carries out the reaction riboflavin + CTP = CDP + FMN + H(+). The protein operates within cofactor biosynthesis; FMN biosynthesis; FMN from riboflavin (CTP route): step 1/1. Functionally, catalyzes the CTP-dependent phosphorylation of riboflavin (vitamin B2) to form flavin mononucleotide (FMN). The chain is Riboflavin kinase from Staphylothermus marinus (strain ATCC 43588 / DSM 3639 / JCM 9404 / F1).